The following is a 78-amino-acid chain: MICOS complex subunit MIC10 (78 aa).

N-acetylserine is present on Ser2. The helical transmembrane segment at 17–36 (AVVKIGTGFGLGIVFSLTFF) threads the bilayer. Over 37-78 (KRRMWPLAFGSGMGLGMAYSNCQHDFQAPYLLHGKYVKEQEQ) the chain is Mitochondrial intermembrane.

The protein belongs to the MICOS complex subunit Mic10 family. Component of the mitochondrial contact site and cristae organizing system (MICOS) complex, composed of at least MICOS10/MIC10, CHCHD3/MIC19, CHCHD6/MIC25, APOOL/MIC27, IMMT/MIC60, APOO/MIC23/MIC26 and MICOS13/MIC13. This complex was also known under the names MINOS or MitOS complex. The MICOS complex associates with mitochondrial outer membrane proteins SAMM50, MTX1 and MTX2 (together described as components of the mitochondrial outer membrane sorting assembly machinery (SAM) complex) and DNAJC11, mitochondrial inner membrane protein TMEM11 and with HSPA9. The MICOS and SAM complexes together with DNAJC11 are part of a large protein complex spanning both membranes termed the mitochondrial intermembrane space bridging (MIB) complex. Interacts with IMMT/MIC60 and MICOS13/MIC13. Interacts with APOO/MIC23/MIC26 and APOOL/MIC27. Interacts with ARMC1.

Its subcellular location is the mitochondrion inner membrane. In terms of biological role, component of the MICOS complex, a large protein complex of the mitochondrial inner membrane that plays crucial roles in the maintenance of crista junctions, inner membrane architecture, and formation of contact sites to the outer membrane. This chain is MICOS complex subunit MIC10, found in Homo sapiens (Human).